A 122-amino-acid polypeptide reads, in one-letter code: Large ribosomal subunit protein uL14 (122 aa).

This sequence belongs to the universal ribosomal protein uL14 family. As to quaternary structure, part of the 50S ribosomal subunit. Forms a cluster with proteins L3 and L19. In the 70S ribosome, L14 and L19 interact and together make contacts with the 16S rRNA in bridges B5 and B8.

Binds to 23S rRNA. Forms part of two intersubunit bridges in the 70S ribosome. The polypeptide is Large ribosomal subunit protein uL14 (Myxococcus xanthus (strain DK1622)).